The chain runs to 448 residues: Asparagine--tRNA ligase (448 aa).

The protein belongs to the class-II aminoacyl-tRNA synthetase family. Homodimer.

It localises to the cytoplasm. The enzyme catalyses tRNA(Asn) + L-asparagine + ATP = L-asparaginyl-tRNA(Asn) + AMP + diphosphate + H(+). The chain is Asparagine--tRNA ligase from Streptococcus thermophilus (strain CNRZ 1066).